The chain runs to 393 residues: Pinosylvin synthase (393 aa).

Lys-57–Arg-60 serves as a coordination point for substrate. Cys-167 is a catalytic residue. Substrate contacts are provided by residues Leu-270 and Gly-308–Arg-310.

The protein belongs to the thiolase-like superfamily. Chalcone/stilbene synthases family. In terms of assembly, homodimer.

It localises to the cytoplasm. The catalysed reaction is (E)-cinnamoyl-CoA + 3 malonyl-CoA + 3 H(+) = (E)-pinosylvin + 4 CO2 + 4 CoA. It catalyses the reaction 3-phenylpropanoyl-CoA + 3 malonyl-CoA + 3 H(+) = dihydropinosylvin + 4 CO2 + 4 CoA. It functions in the pathway phytoalexin biosynthesis; hydropinosylvin biosynthesis. In terms of biological role, catalyzes the production of pinosylvin from cinnamoyl-CoA and malonyl-CoA, and dihydropinosylvin from dihydrocinnamoyl-CoA. The polypeptide is Pinosylvin synthase (Pinus sylvestris (Scotch pine)).